A 424-amino-acid polypeptide reads, in one-letter code: Virion nicking-joining enzyme (424 aa).

PLD phosphodiesterase domains are found at residues 110 to 137 and 320 to 346; these read LGGV…DWRS and YSRV…TGNY.

This sequence belongs to the orthopoxvirus OPG042 family.

The protein resides in the virion. Functionally, DNA nicking enzyme that cleaves extruded cruciform DNA at its tip. Probably nicks viral hairpins. The protein is Virion nicking-joining enzyme (OPG042) of Vaccinia virus (strain Western Reserve) (VACV).